Here is a 129-residue protein sequence, read N- to C-terminus: Ribulose bisphosphate carboxylase small subunit (129 aa).

A compositionally biased stretch (basic and acidic residues) spans 104-120 (ENEPSLRMTRTESDGRS). The segment at 104–129 (ENEPSLRMTRTESDGRSQHYTWETQR) is disordered.

It belongs to the RuBisCO small chain family. As to quaternary structure, heterohexadecamer of 8 large and 8 small subunits.

In terms of biological role, ruBisCO catalyzes two reactions: the carboxylation of D-ribulose 1,5-bisphosphate, the primary event in carbon dioxide fixation, as well as the oxidative fragmentation of the pentose substrate. Both reactions occur simultaneously and in competition at the same active site. Although the small subunit is not catalytic it is essential for maximal activity. The chain is Ribulose bisphosphate carboxylase small subunit from Sinorhizobium medicae (strain WSM419) (Ensifer medicae).